Here is a 513-residue protein sequence, read N- to C-terminus: ATP synthase subunit alpha (513 aa).

Residue 169–176 (GDRQIGKT) coordinates ATP.

Belongs to the ATPase alpha/beta chains family. As to quaternary structure, F-type ATPases have 2 components, CF(1) - the catalytic core - and CF(0) - the membrane proton channel. CF(1) has five subunits: alpha(3), beta(3), gamma(1), delta(1), epsilon(1). CF(0) has three main subunits: a(1), b(2) and c(9-12). The alpha and beta chains form an alternating ring which encloses part of the gamma chain. CF(1) is attached to CF(0) by a central stalk formed by the gamma and epsilon chains, while a peripheral stalk is formed by the delta and b chains.

The protein resides in the cell inner membrane. The catalysed reaction is ATP + H2O + 4 H(+)(in) = ADP + phosphate + 5 H(+)(out). Its function is as follows. Produces ATP from ADP in the presence of a proton gradient across the membrane. The alpha chain is a regulatory subunit. The sequence is that of ATP synthase subunit alpha from Shewanella sediminis (strain HAW-EB3).